The following is a 276-amino-acid chain: Imidazole glycerol phosphate synthase subunit HisF (276 aa).

Residues D11 and D130 contribute to the active site.

The protein belongs to the HisA/HisF family. As to quaternary structure, heterodimer of HisH and HisF.

It is found in the cytoplasm. It catalyses the reaction 5-[(5-phospho-1-deoxy-D-ribulos-1-ylimino)methylamino]-1-(5-phospho-beta-D-ribosyl)imidazole-4-carboxamide + L-glutamine = D-erythro-1-(imidazol-4-yl)glycerol 3-phosphate + 5-amino-1-(5-phospho-beta-D-ribosyl)imidazole-4-carboxamide + L-glutamate + H(+). Its pathway is amino-acid biosynthesis; L-histidine biosynthesis; L-histidine from 5-phospho-alpha-D-ribose 1-diphosphate: step 5/9. In terms of biological role, IGPS catalyzes the conversion of PRFAR and glutamine to IGP, AICAR and glutamate. The HisF subunit catalyzes the cyclization activity that produces IGP and AICAR from PRFAR using the ammonia provided by the HisH subunit. The chain is Imidazole glycerol phosphate synthase subunit HisF from Beijerinckia indica subsp. indica (strain ATCC 9039 / DSM 1715 / NCIMB 8712).